The following is a 429-amino-acid chain: Saccharopine dehydrogenase-like oxidoreductase (429 aa).

An N-acetylalanine modification is found at Ala-2. Ser-217 is subject to Phosphoserine.

This sequence belongs to the saccharopine dehydrogenase family.

The polypeptide is Saccharopine dehydrogenase-like oxidoreductase (SCCPDH) (Pongo abelii (Sumatran orangutan)).